The primary structure comprises 128 residues: MSDQGFPRRQRLLTAGDYQHVFAHASFKVHGKGLLVLARPNALGYPRVGFVFSKKNVRRAVDRNRLKRLVRESFRLQSHRLPAVDIIVLARRGVDALDNATLHRQLHGMWRRLEKDVRKQSVASTPSP.

The protein belongs to the RnpA family. In terms of assembly, consists of a catalytic RNA component (M1 or rnpB) and a protein subunit.

The enzyme catalyses Endonucleolytic cleavage of RNA, removing 5'-extranucleotides from tRNA precursor.. In terms of biological role, RNaseP catalyzes the removal of the 5'-leader sequence from pre-tRNA to produce the mature 5'-terminus. It can also cleave other RNA substrates such as 4.5S RNA. The protein component plays an auxiliary but essential role in vivo by binding to the 5'-leader sequence and broadening the substrate specificity of the ribozyme. In Chromohalobacter salexigens (strain ATCC BAA-138 / DSM 3043 / CIP 106854 / NCIMB 13768 / 1H11), this protein is Ribonuclease P protein component.